The sequence spans 328 residues: DNA-directed RNA polymerase subunit alpha (328 aa).

Residues 1-230 form an alpha N-terminal domain (alpha-NTD) region; sequence MIQITGRKFK…IILDHFMFIE (230 aa). Positions 257–328 are alpha C-terminal domain (alpha-CTD); it reads PEDVMSKKVE…FGLSLRKGDK (72 aa).

This sequence belongs to the RNA polymerase alpha chain family. Homodimer. The RNAP catalytic core consists of 2 alpha, 1 beta, 1 beta' and 1 omega subunit. When a sigma factor is associated with the core the holoenzyme is formed, which can initiate transcription.

The enzyme catalyses RNA(n) + a ribonucleoside 5'-triphosphate = RNA(n+1) + diphosphate. Its function is as follows. DNA-dependent RNA polymerase catalyzes the transcription of DNA into RNA using the four ribonucleoside triphosphates as substrates. This Fervidobacterium nodosum (strain ATCC 35602 / DSM 5306 / Rt17-B1) protein is DNA-directed RNA polymerase subunit alpha.